The chain runs to 284 residues: Acetyl-coenzyme A carboxylase carboxyl transferase subunit beta (284 aa).

One can recognise a CoA carboxyltransferase N-terminal domain in the interval 25-284 (LWVKCPETGA…LCKILTKSVQ (260 aa)).

This sequence belongs to the AccD/PCCB family. As to quaternary structure, acetyl-CoA carboxylase is a heterohexamer composed of biotin carboxyl carrier protein (AccB), biotin carboxylase (AccC) and two subunits each of ACCase subunit alpha (AccA) and ACCase subunit beta (AccD).

It is found in the cytoplasm. The catalysed reaction is N(6)-carboxybiotinyl-L-lysyl-[protein] + acetyl-CoA = N(6)-biotinyl-L-lysyl-[protein] + malonyl-CoA. The protein operates within lipid metabolism; malonyl-CoA biosynthesis; malonyl-CoA from acetyl-CoA: step 1/1. Its function is as follows. Component of the acetyl coenzyme A carboxylase (ACC) complex. Biotin carboxylase (BC) catalyzes the carboxylation of biotin on its carrier protein (BCCP) and then the CO(2) group is transferred by the transcarboxylase to acetyl-CoA to form malonyl-CoA. The sequence is that of Acetyl-coenzyme A carboxylase carboxyl transferase subunit beta from Liberibacter asiaticus (strain psy62).